Here is a 287-residue protein sequence, read N- to C-terminus: CBK1 kinase activator protein MOB2 (287 aa).

The interval 1 to 89 is disordered; that stretch reads MSFFNFKAFG…QQQEASERSE (89 aa). At Tyr33 the chain carries Phosphotyrosine. The segment covering 34 to 44 has biased composition (low complexity); the sequence is SSPHSSNSRLS. Over residues 45–56 the composition is skewed to basic residues; that stretch reads LRNKHHSPKRHS. Ser59 carries the post-translational modification Phosphoserine. Low complexity predominate over residues 63–83; the sequence is QKSTPQSQQLTSTTPQSQQQE. Thr76 is modified (phosphothreonine).

Belongs to the MOB1/phocein family. In terms of assembly, interacts with protein kinase CBK1 to form the RAM CBK1-MOB2 kinase complex.

It localises to the nucleus. It is found in the cytoplasm. In terms of biological role, functions as an activator subunit for the CBK1 protein kinase. Part of the regulation of ACE2 activity and cellular morphogenesis (RAM) signaling network. Required for coordinating polarized cell growth during interphase with the onset of mitosis. Required for mother/daughter cell separation after cytokinesis. Also has a role in the prevention of nuclear export of ACE2 from the daughter cell nucleus after mitotic exit. It coordinates ACE2-dependent transcription with mitotic exit network activation. The polypeptide is CBK1 kinase activator protein MOB2 (MOB2) (Saccharomyces cerevisiae (strain ATCC 204508 / S288c) (Baker's yeast)).